A 144-amino-acid chain; its full sequence is ATP synthase subunit 9, mitochondrial (144 aa).

Residues 1–63 (MASTRVLASR…ATRQITQKRA (63 aa)) constitute a mitochondrion transit peptide. 2 helical membrane passes run 83–103 (TAAIGLTGAGIGIGLVFAALL) and 120–140 (AILGFAFVEAIGLFDLMVALM).

Belongs to the ATPase C chain family. F-type ATPases have 2 components, CF(1) - the catalytic core - and CF(0) - the membrane proton channel. CF(1) has five subunits: alpha(3), beta(3), gamma(1), delta(1), epsilon(1). CF(0) has three main subunits: a, b and c.

It is found in the mitochondrion membrane. Its function is as follows. Mitochondrial membrane ATP synthase (F(1)F(0) ATP synthase or Complex V) produces ATP from ADP in the presence of a proton gradient across the membrane which is generated by electron transport complexes of the respiratory chain. F-type ATPases consist of two structural domains, F(1) - containing the extramembraneous catalytic core and F(0) - containing the membrane proton channel, linked together by a central stalk and a peripheral stalk. During catalysis, ATP synthesis in the catalytic domain of F(1) is coupled via a rotary mechanism of the central stalk subunits to proton translocation. Part of the complex F(0) domain. A homomeric c-ring of probably 10 subunits is part of the complex rotary element. This chain is ATP synthase subunit 9, mitochondrial (ATP9), found in Podospora anserina (Pleurage anserina).